The chain runs to 608 residues: Microtubule-associated protein VP7 (608 aa).

The protein localises to the virion. The protein resides in the host cytoplasm. Its subcellular location is the host cytoskeleton. Minor inner capsid component. Displays NTPase and RNA 5'-triphosphatase (RTPase) activities. May function as a cofactor of polymerase. Associates with microtubules and plays a role in the formation, structural organization and morphology of viral inclusions, where the assembly of cores and the replication of viral RNA occur. The chain is Microtubule-associated protein VP7 from Oryza latifolia (Indian wild rice).